The following is a 162-amino-acid chain: NADH-quinone oxidoreductase subunit I (162 aa).

4Fe-4S ferredoxin-type domains follow at residues 53-83 (LRRY…IEAE) and 93-122 (TRYD…EGPN). Positions 63, 66, 69, 73, 102, 105, 108, and 112 each coordinate [4Fe-4S] cluster.

The protein belongs to the complex I 23 kDa subunit family. NDH-1 is composed of 14 different subunits. Subunits NuoA, H, J, K, L, M, N constitute the membrane sector of the complex. Requires [4Fe-4S] cluster as cofactor.

The protein resides in the cell inner membrane. It catalyses the reaction a quinone + NADH + 5 H(+)(in) = a quinol + NAD(+) + 4 H(+)(out). NDH-1 shuttles electrons from NADH, via FMN and iron-sulfur (Fe-S) centers, to quinones in the respiratory chain. The immediate electron acceptor for the enzyme in this species is believed to be ubiquinone. Couples the redox reaction to proton translocation (for every two electrons transferred, four hydrogen ions are translocated across the cytoplasmic membrane), and thus conserves the redox energy in a proton gradient. The sequence is that of NADH-quinone oxidoreductase subunit I from Maricaulis maris (strain MCS10) (Caulobacter maris).